Consider the following 132-residue polypeptide: Peptide methionine sulfoxide reductase MsrB (132 aa).

Residues 8–130 (LDSWREELTE…NSASLKLVPR (123 aa)) form the MsrB domain. Cys47, Cys50, Cys96, and Cys99 together coordinate Zn(2+). Cys119 serves as the catalytic Nucleophile.

The protein belongs to the MsrB Met sulfoxide reductase family. It depends on Zn(2+) as a cofactor.

The enzyme catalyses L-methionyl-[protein] + [thioredoxin]-disulfide + H2O = L-methionyl-(R)-S-oxide-[protein] + [thioredoxin]-dithiol. This chain is Peptide methionine sulfoxide reductase MsrB, found in Pseudomonas paraeruginosa (strain DSM 24068 / PA7) (Pseudomonas aeruginosa (strain PA7)).